Here is a 125-residue protein sequence, read N- to C-terminus: Large ribosomal subunit protein eL8 (125 aa).

This sequence belongs to the eukaryotic ribosomal protein eL8 family. As to quaternary structure, part of the 50S ribosomal subunit. Probably part of the RNase P complex.

It is found in the cytoplasm. In terms of biological role, multifunctional RNA-binding protein that recognizes the K-turn motif in ribosomal RNA, the RNA component of RNase P, box H/ACA, box C/D and box C'/D' sRNAs. This Metallosphaera sedula (strain ATCC 51363 / DSM 5348 / JCM 9185 / NBRC 15509 / TH2) protein is Large ribosomal subunit protein eL8.